The chain runs to 273 residues: Dermonecrotic toxin LhSicTox-alphaIA2biv (273 aa).

The active site involves histidine 5. Residues glutamate 25 and aspartate 27 each contribute to the Mg(2+) site. Catalysis depends on histidine 41, which acts as the Nucleophile. 2 disulfide bridges follow: cysteine 45–cysteine 51 and cysteine 47–cysteine 190. Position 85 (aspartate 85) interacts with Mg(2+).

Belongs to the arthropod phospholipase D family. Class II subfamily. The cofactor is Mg(2+). As to expression, expressed by the venom gland.

The protein resides in the secreted. The catalysed reaction is an N-(acyl)-sphingosylphosphocholine = an N-(acyl)-sphingosyl-1,3-cyclic phosphate + choline. It carries out the reaction an N-(acyl)-sphingosylphosphoethanolamine = an N-(acyl)-sphingosyl-1,3-cyclic phosphate + ethanolamine. It catalyses the reaction a 1-acyl-sn-glycero-3-phosphocholine = a 1-acyl-sn-glycero-2,3-cyclic phosphate + choline. The enzyme catalyses a 1-acyl-sn-glycero-3-phosphoethanolamine = a 1-acyl-sn-glycero-2,3-cyclic phosphate + ethanolamine. In terms of biological role, dermonecrotic toxins cleave the phosphodiester linkage between the phosphate and headgroup of certain phospholipids (sphingolipid and lysolipid substrates), forming an alcohol (often choline) and a cyclic phosphate. This toxin acts on sphingomyelin (SM). It may also act on ceramide phosphoethanolamine (CPE), lysophosphatidylcholine (LPC) and lysophosphatidylethanolamine (LPE), but not on lysophosphatidylserine (LPS), and lysophosphatidylglycerol (LPG). It acts by transphosphatidylation, releasing exclusively cyclic phosphate products as second products. Induces dermonecrosis, hemolysis, increased vascular permeability, edema, inflammatory response, and platelet aggregation. In Loxosceles hirsuta (Recluse spider), this protein is Dermonecrotic toxin LhSicTox-alphaIA2biv.